The following is a 710-amino-acid chain: MSNPLPRKLFVTTALPYANGAFHIGHIMEYIQADIWVRFQRMQGNQVDFVGADDAHGAPIMIAAEKAGLTPQQFVSNIAAGRKQYLDGFHIAFDNWSSTDSPENHQLAQQIYLDLKKAGLIASKTVEQFFDPEKNMFLPDRYIKGECPKCHTKDQYGDNCEVCAAVYSPTDLINPYSALTGATPVLKHSEHFFFTLSDPRCVAFLEEWVSGLDTDGKTHLQAEVANKVKEWFSARTNPDGTISEGLNDWDISRDAPYFGIEIPDAPGKYFYVWLDAPVGYLASLKNLLDKRGENFDAYMAEPALEQIHFIGKDIVNFHTLFWPAMLKFSGRKTPNKVFVHGFLTVNNGEKMSKSRGTGLDPLKYLSLGMNPEWLRYYLANKLSARNEDIDFNPEDFIARVNSDLIGKYVNIASRAAGFIAKKFDGRVVSDWATADDVFISKLRNVASEIQALYDQREYGKALRTIMEQADAINAYVDANKPWELAKKPENSAALQEVCSRLLEAFRILTIYLKPVLPELAKQVEALLNIAPLQWSDVGTPLPHNHQVNPYSHLMTRVEPKMLDALFDMPAVVDVTVNVPNGTSETEVAADSTIEAIAPEIKIDDFAKIDLRIAKIVNCEHVEGSDKLLRLTLDMGEGRLRNVFSGIKSAYQPEDLIGKLTVMVANLAPRKMKFGISEGMVLAASAADEKSNPGIYILNPWPGAEPGMRVG.

The short motif at 16–26 (PYANGAFHIGH) is the 'HIGH' region element. Residues cysteine 147, cysteine 150, cysteine 160, and cysteine 163 each coordinate Zn(2+). The short motif at 350 to 354 (KMSKS) is the 'KMSKS' region element. Residue lysine 353 coordinates ATP. One can recognise a tRNA-binding domain in the interval 604–710 (DFAKIDLRIA…PGAEPGMRVG (107 aa)).

This sequence belongs to the class-I aminoacyl-tRNA synthetase family. MetG type 1 subfamily. In terms of assembly, homodimer. Zn(2+) is required as a cofactor.

It localises to the cytoplasm. It carries out the reaction tRNA(Met) + L-methionine + ATP = L-methionyl-tRNA(Met) + AMP + diphosphate. Functionally, is required not only for elongation of protein synthesis but also for the initiation of all mRNA translation through initiator tRNA(fMet) aminoacylation. The protein is Methionine--tRNA ligase of Herminiimonas arsenicoxydans.